The following is a 208-amino-acid chain: Protein GrpE (208 aa).

A compositionally biased stretch (basic and acidic residues) spans 1 to 12 (MTNKDESVKKNT). The tract at residues 1–51 (MTNKDESVKKNTESTVEETNVKQNIDDSVEQAEESKGHLQDEAIEETSDEN) is disordered. A compositionally biased stretch (polar residues) spans 13 to 23 (ESTVEETNVKQ). Acidic residues predominate over residues 42–51 (EAIEETSDEN).

It belongs to the GrpE family. In terms of assembly, homodimer.

The protein localises to the cytoplasm. Its function is as follows. Participates actively in the response to hyperosmotic and heat shock by preventing the aggregation of stress-denatured proteins, in association with DnaK and GrpE. It is the nucleotide exchange factor for DnaK and may function as a thermosensor. Unfolded proteins bind initially to DnaJ; upon interaction with the DnaJ-bound protein, DnaK hydrolyzes its bound ATP, resulting in the formation of a stable complex. GrpE releases ADP from DnaK; ATP binding to DnaK triggers the release of the substrate protein, thus completing the reaction cycle. Several rounds of ATP-dependent interactions between DnaJ, DnaK and GrpE are required for fully efficient folding. This chain is Protein GrpE, found in Staphylococcus aureus (strain COL).